The following is an 875-amino-acid chain: Alanine--tRNA ligase (875 aa).

Residues H563, H567, C665, and H669 each contribute to the Zn(2+) site.

The protein belongs to the class-II aminoacyl-tRNA synthetase family. Requires Zn(2+) as cofactor.

The protein resides in the cytoplasm. The enzyme catalyses tRNA(Ala) + L-alanine + ATP = L-alanyl-tRNA(Ala) + AMP + diphosphate. Functionally, catalyzes the attachment of alanine to tRNA(Ala) in a two-step reaction: alanine is first activated by ATP to form Ala-AMP and then transferred to the acceptor end of tRNA(Ala). Also edits incorrectly charged Ser-tRNA(Ala) and Gly-tRNA(Ala) via its editing domain. This Desulfitobacterium hafniense (strain Y51) protein is Alanine--tRNA ligase.